Consider the following 309-residue polypeptide: Manganese-dependent inorganic pyrophosphatase (309 aa).

Histidine 9, aspartate 13, aspartate 15, aspartate 75, histidine 97, and aspartate 149 together coordinate Mn(2+).

In terms of assembly, homodimer. Mn(2+) serves as cofactor.

It is found in the cytoplasm. It catalyses the reaction diphosphate + H2O = 2 phosphate + H(+). In Bacillus subtilis (strain 168), this protein is Manganese-dependent inorganic pyrophosphatase (ppaC).